The chain runs to 242 residues: Glucosamine-6-phosphate deaminase (242 aa).

Aspartate 67 serves as the catalytic Proton acceptor; for enolization step. Catalysis depends on asparagine 136, which acts as the For ring-opening step. Catalysis depends on histidine 138, which acts as the Proton acceptor; for ring-opening step. Residue glutamate 143 is the For ring-opening step of the active site.

The protein belongs to the glucosamine/galactosamine-6-phosphate isomerase family. NagB subfamily.

It catalyses the reaction alpha-D-glucosamine 6-phosphate + H2O = beta-D-fructose 6-phosphate + NH4(+). Its pathway is amino-sugar metabolism; N-acetylneuraminate degradation; D-fructose 6-phosphate from N-acetylneuraminate: step 5/5. Its function is as follows. Catalyzes the reversible isomerization-deamination of glucosamine 6-phosphate (GlcN6P) to form fructose 6-phosphate (Fru6P) and ammonium ion. The polypeptide is Glucosamine-6-phosphate deaminase (Clostridium perfringens (strain 13 / Type A)).